Consider the following 230-residue polypeptide: Small ribosomal subunit protein uS3 (230 aa).

The 53-residue stretch at 43 to 95 folds into the KH type-2 domain; the sequence is VNRVIIYSARPKMISEERKAHLAKLLELKFGLEKPVIEVLPIENPNLDAHVIA.

This sequence belongs to the universal ribosomal protein uS3 family. Part of the 30S ribosomal subunit.

Its function is as follows. Binds the lower part of the 30S subunit head. In Nanoarchaeum equitans (strain Kin4-M), this protein is Small ribosomal subunit protein uS3.